We begin with the raw amino-acid sequence, 947 residues long: Serine-aspartate repeat-containing protein C (947 aa).

The N-terminal stretch at 1-50 (MNNKKTATNRKGMIPNRLNKFSIRKYSVGTASILVGTTLIFGLSGHEAKA) is a signal peptide. Residues 21-32 (FSIRKYSVGTAS) carry the YSIRK-G/S signaling motif motif. Residues 51–164 (AEHTNGELNQ…STTPKTTTIK (114 aa)) are disordered. A ligand binding A region region spans residues 51–495 (AEHTNGELNQ…GSSTANGDQK (445 aa)). Residues 56–71 (GELNQSKNETTAPSEN) show a composition bias toward polar residues. Basic and acidic residues predominate over residues 72–83 (KTTKKVDSRQLK). Over residues 84-155 (DNTQTATADQ…SNLTQAKDVS (72 aa)) the composition is skewed to polar residues. CNA-B domains follow at residues 496–606 (KYNL…YKTP) and 607–717 (KYSL…EEET). Residues 678 to 927 (TQTGTNTTED…NNSNNGTLFG (250 aa)) form a disordered region. Composition is skewed to acidic residues over residues 685-695 (TEDDKDADGGE) and 712-886 (YYEE…DSDS). Residues 910–914 (LPETG) carry the LPXTG sorting signal motif. Low complexity predominate over residues 912 to 927 (ETGSENNNSNNGTLFG). Thr-913 carries the post-translational modification Pentaglycyl murein peptidoglycan amidated threonine. Residues 914–947 (GSENNNSNNGTLFGGLFAALGSLLLFGRRKKQNK) constitute a propeptide, removed by sortase.

The protein belongs to the serine-aspartate repeat-containing protein (SDr) family. Homodimerizes; via N2-Domain. Interacts with host NRXN1; this interaction mediates bacterial attachment to host cells.

The protein resides in the secreted. Its subcellular location is the cell wall. Its function is as follows. Cell surface-associated calcium-binding protein which plays an important role in adhesion and pathogenesis. Mediates interactions with components of the extracellular matrix such as host NRXN1 to promote bacterial adhesion. The protein is Serine-aspartate repeat-containing protein C (sdrC) of Staphylococcus aureus (strain Newman).